Consider the following 254-residue polypeptide: Nickel import ATP-binding protein NikO (254 aa).

The region spanning 5–246 is the ABC transporter domain; it reads FELQGVQFAY…TALLRRARLL (242 aa). 37–44 provides a ligand contact to ATP; it reads GANGSGKS.

Belongs to the ABC transporter superfamily. Forms an energy-coupling factor (ECF) transporter complex composed of an ATP-binding protein (A component, NikO), a transmembrane protein (T component, NikQ) and a fused possible substrate-capture protein (S component, NikMN) of unknown stoichimetry.

The protein resides in the cell inner membrane. It catalyses the reaction Ni(2+)(out) + ATP + H2O = Ni(2+)(in) + ADP + phosphate + H(+). Its function is as follows. Part of the energy-coupling factor (ECF) transporter complex NikMNQO involved in nickel import. The complex confers nickel uptake upon expression in E.coli. Shows very low activity with cobalt. Presumably responsible for energy coupling to the transport system. This is Nickel import ATP-binding protein NikO from Rhodobacter capsulatus (strain ATCC BAA-309 / NBRC 16581 / SB1003).